Reading from the N-terminus, the 536-residue chain is Subtilisin-like proteinase Spm1 (536 aa).

Positions 1-15 are cleaved as a signal peptide; it reads MKSVILLSLAACAVA. Positions 16 to 147 are excised as a propeptide; it reads APTAGVETIH…RYEEVKKDEC (132 aa). The Inhibitor I9 domain maps to 44–137; sequence YIIKFKKHVD…IERDTIVHTM (94 aa). Positions 156 to 462 constitute a Peptidase S8 domain; the sequence is PWGLSRVSHR…GGCSNYFEIV (307 aa). Catalysis depends on charge relay system residues D192 and H224. N254 and N294 each carry an N-linked (GlcNAc...) asparagine glycan. S390 (charge relay system) is an active-site residue.

It belongs to the peptidase S8 family.

It localises to the vacuole. In Pyricularia oryzae (strain 70-15 / ATCC MYA-4617 / FGSC 8958) (Rice blast fungus), this protein is Subtilisin-like proteinase Spm1 (SPM1).